The chain runs to 240 residues: REF/SRPP-like protein At1g67360 (240 aa).

Positions 208–240 are disordered; sequence KEDARRKKGGDTAGKKGETTDAADGDKSSSDSE.

This sequence belongs to the REF/SRPP family.

This is REF/SRPP-like protein At1g67360 from Arabidopsis thaliana (Mouse-ear cress).